The sequence spans 295 residues: Pyridoxal 5'-phosphate synthase subunit PdxS (295 aa).

Asp25 lines the D-ribose 5-phosphate pocket. Lys82 serves as the catalytic Schiff-base intermediate with D-ribose 5-phosphate. Gly154 contacts D-ribose 5-phosphate. Arg166 is a binding site for D-glyceraldehyde 3-phosphate. Residues Gly215 and 236-237 (GS) each bind D-ribose 5-phosphate.

Belongs to the PdxS/SNZ family. In terms of assembly, in the presence of PdxT, forms a dodecamer of heterodimers.

It catalyses the reaction aldehydo-D-ribose 5-phosphate + D-glyceraldehyde 3-phosphate + L-glutamine = pyridoxal 5'-phosphate + L-glutamate + phosphate + 3 H2O + H(+). It functions in the pathway cofactor biosynthesis; pyridoxal 5'-phosphate biosynthesis. Functionally, catalyzes the formation of pyridoxal 5'-phosphate from ribose 5-phosphate (RBP), glyceraldehyde 3-phosphate (G3P) and ammonia. The ammonia is provided by the PdxT subunit. Can also use ribulose 5-phosphate and dihydroxyacetone phosphate as substrates, resulting from enzyme-catalyzed isomerization of RBP and G3P, respectively. The polypeptide is Pyridoxal 5'-phosphate synthase subunit PdxS (Actinobacillus pleuropneumoniae serotype 5b (strain L20)).